The chain runs to 181 residues: ATP synthase subunit delta (181 aa).

Belongs to the ATPase delta chain family. In terms of assembly, F-type ATPases have 2 components, F(1) - the catalytic core - and F(0) - the membrane proton channel. F(1) has five subunits: alpha(3), beta(3), gamma(1), delta(1), epsilon(1). F(0) has three main subunits: a(1), b(2) and c(10-14). The alpha and beta chains form an alternating ring which encloses part of the gamma chain. F(1) is attached to F(0) by a central stalk formed by the gamma and epsilon chains, while a peripheral stalk is formed by the delta and b chains.

The protein resides in the cell membrane. F(1)F(0) ATP synthase produces ATP from ADP in the presence of a proton or sodium gradient. F-type ATPases consist of two structural domains, F(1) containing the extramembraneous catalytic core and F(0) containing the membrane proton channel, linked together by a central stalk and a peripheral stalk. During catalysis, ATP synthesis in the catalytic domain of F(1) is coupled via a rotary mechanism of the central stalk subunits to proton translocation. Functionally, this protein is part of the stalk that links CF(0) to CF(1). It either transmits conformational changes from CF(0) to CF(1) or is implicated in proton conduction. In Mycoplasmoides gallisepticum (strain R(low / passage 15 / clone 2)) (Mycoplasma gallisepticum), this protein is ATP synthase subunit delta.